The chain runs to 551 residues: Probable glucomannan 4-beta-mannosyltransferase 3 (551 aa).

Residues 60-80 (ACLALSAMLLADAVLMAAACF) traverse the membrane as a helical segment. D154 is an active-site residue. D213 and D215 together coordinate substrate. D307 is a catalytic residue. A run of 4 helical transmembrane segments spans residues 386-406 (VVAH…SVLI), 409-429 (VTVP…LHAI), 504-524 (ILFS…GGDY), and 525-545 (YFVY…GFCG).

This sequence belongs to the glycosyltransferase 2 family. Plant cellulose synthase-like A subfamily.

The protein resides in the golgi apparatus membrane. It carries out the reaction GDP-mannose + (glucomannan)n = GDP + (glucomannan)n+1.. Its function is as follows. Probable mannan synthase which consists of a 4-beta-mannosyltransferase activity on mannan using GDP-mannose. The beta-1,4-mannan product is the backbone for galactomannan synthesis by galactomannan galactosyltransferase. Galactomannan is a noncellulosic polysaccharides of plant cell wall. The sequence is that of Probable glucomannan 4-beta-mannosyltransferase 3 from Oryza sativa subsp. japonica (Rice).